Reading from the N-terminus, the 186-residue chain is Putative manganese efflux pump MntP (186 aa).

The next 6 helical transmembrane spans lie at 1 to 21 (MSFL…FAVS), 41 to 61 (VFFG…GSAV), 62 to 82 (SGFV…FIGG), 105 to 127 (LFLL…AFLG), 139 to 159 (CVTF…GHFF), and 163 to 183 (VEIL…AEHM).

Belongs to the MntP (TC 9.B.29) family.

It localises to the cell membrane. Probably functions as a manganese efflux pump. The chain is Putative manganese efflux pump MntP from Methanosarcina mazei (strain ATCC BAA-159 / DSM 3647 / Goe1 / Go1 / JCM 11833 / OCM 88) (Methanosarcina frisia).